The sequence spans 1000 residues: uncharacterized protein (1000 aa).

The segment covering 787–809 has biased composition (basic and acidic residues); sequence RQYEKLKRQRAKSETERHQERHG. A disordered region spans residues 787–812; the sequence is RQYEKLKRQRAKSETERHQERHGKLS.

This is an uncharacterized protein from Picosynechococcus sp. (strain ATCC 27264 / PCC 7002 / PR-6) (Agmenellum quadruplicatum).